We begin with the raw amino-acid sequence, 294 residues long: Protein huluwa (294 aa).

The Extracellular segment spans residues 1-23; that stretch reads MSQLGSAVPSSNLPEGLPVSSLA. Residues 24–44 form a helical membrane-spanning segment; sequence LLILVLIPCVLLLLLLNCLFV. Residues 45–294 lie on the Cytoplasmic side of the membrane; it reads GYKLFRMTRR…PPITTKQYWV (250 aa). A disordered region spans residues 154 to 175; sequence SDSDMERVNTVPPNSPVLRVTP. A VPPNSP motif motif is present at residues 164–169; the sequence is VPPNSP. The SLRRSST motif motif lies at 184 to 190; sequence SLRRSST.

The protein belongs to the huluwa family. In terms of assembly, interacts with axin1; leading to promote the tankyrase-mediated degradation of axin. Interacts with axin2; leading to promote the tankyrase-mediated degradation of axin.

The protein localises to the cell membrane. Key maternal determinant of the dorsal organizer and body axis formation in vertebrates that acts by promoting stabilization of beta-catenin (ctnnb1). Localizes on the plasma membrane of the future dorsal blastomeres in early blastulas and binds to and promotes the tankyrase-mediated degradation of axin (axin1 and axin2). Axin degradation results in stabilization and nuclear translocation of beta-catenin (ctnnb1) for activating organizer-specific target gene expression. The polypeptide is Protein huluwa (Danio rerio (Zebrafish)).